The chain runs to 90 residues: Large ribosomal subunit protein bL27 (90 aa).

Residues M1–G22 form a disordered region.

The protein belongs to the bacterial ribosomal protein bL27 family.

This is Large ribosomal subunit protein bL27 from Coxiella burnetii (strain Dugway 5J108-111).